A 631-amino-acid chain; its full sequence is tRNA uridine 5-carboxymethylaminomethyl modification enzyme MnmG (631 aa).

Residues 13 to 18 (GGGHAG), Val125, and Ser180 contribute to the FAD site. 273–287 (GPRYCPSIEDKVMRF) provides a ligand contact to NAD(+). Gln370 is an FAD binding site.

Belongs to the MnmG family. Homodimer. Heterotetramer of two MnmE and two MnmG subunits. FAD is required as a cofactor.

The protein resides in the cytoplasm. Functionally, NAD-binding protein involved in the addition of a carboxymethylaminomethyl (cmnm) group at the wobble position (U34) of certain tRNAs, forming tRNA-cmnm(5)s(2)U34. This is tRNA uridine 5-carboxymethylaminomethyl modification enzyme MnmG from Vibrio campbellii (strain ATCC BAA-1116).